The following is a 756-amino-acid chain: 5-methyltetrahydropteroyltriglutamate--homocysteine methyltransferase (756 aa).

5-methyltetrahydropteroyltri-L-glutamate-binding positions include 16–19 (RELK) and Lys116. L-homocysteine-binding positions include 435–437 (IGS) and Glu488. L-methionine-binding positions include 435-437 (IGS) and Glu488. 5-methyltetrahydropteroyltri-L-glutamate contacts are provided by residues 519–520 (RC) and Trp565. Residue Asp603 coordinates L-homocysteine. Asp603 contributes to the L-methionine binding site. Glu609 contributes to the 5-methyltetrahydropteroyltri-L-glutamate binding site. Zn(2+)-binding residues include His645, Cys647, and Glu669. His698 serves as the catalytic Proton donor. A Zn(2+)-binding site is contributed by Cys730.

The protein belongs to the vitamin-B12 independent methionine synthase family. Zn(2+) is required as a cofactor.

It catalyses the reaction 5-methyltetrahydropteroyltri-L-glutamate + L-homocysteine = tetrahydropteroyltri-L-glutamate + L-methionine. It functions in the pathway amino-acid biosynthesis; L-methionine biosynthesis via de novo pathway; L-methionine from L-homocysteine (MetE route): step 1/1. In terms of biological role, catalyzes the transfer of a methyl group from 5-methyltetrahydrofolate to homocysteine resulting in methionine formation. In Marinobacter nauticus (strain ATCC 700491 / DSM 11845 / VT8) (Marinobacter aquaeolei), this protein is 5-methyltetrahydropteroyltriglutamate--homocysteine methyltransferase.